Here is a 245-residue protein sequence, read N- to C-terminus: Eukaryotic translation initiation factor 6 (245 aa).

Belongs to the eIF-6 family. Monomer. Associates with the 60S ribosomal subunit.

It localises to the cytoplasm. The protein resides in the nucleus. It is found in the nucleolus. Its function is as follows. Binds to the 60S ribosomal subunit and prevents its association with the 40S ribosomal subunit to form the 80S initiation complex in the cytoplasm. May also be involved in ribosome biogenesis. The polypeptide is Eukaryotic translation initiation factor 6 (eif6) (Danio rerio (Zebrafish)).